The sequence spans 290 residues: Enoyl-CoA hydratase, mitochondrial (290 aa).

The transit peptide at 1 to 27 directs the protein to the mitochondrion; sequence MAALRALLPRVRAPLRPWLFCPVQRSF. Residues 98–101 and Gly141 each bind substrate; that span reads ADIK. An N6-acetyllysine; alternate modification is found at Lys101. At Lys101 the chain carries N6-succinyllysine; alternate. Lys204 carries the N6-succinyllysine modification. Residue Lys211 is modified to N6-acetyllysine.

It belongs to the enoyl-CoA hydratase/isomerase family. Homohexamer; dimer of trimers.

The protein localises to the mitochondrion matrix. The catalysed reaction is a (3S)-3-hydroxyacyl-CoA = a (2E)-enoyl-CoA + H2O. It carries out the reaction a (3E)-enoyl-CoA = a 4-saturated (2E)-enoyl-CoA. It catalyses the reaction (3E)-hexenoyl-CoA = (2E)-hexenoyl-CoA. The enzyme catalyses (3S)-3-hydroxybutanoyl-CoA = (2E)-butenoyl-CoA + H2O. The catalysed reaction is 3-hydroxyisovaleryl-CoA = 3-methylbut-2-enoyl-CoA + H2O. It carries out the reaction 3-hydroxypropanoyl-CoA = acryloyl-CoA + H2O. It catalyses the reaction 3-hydroxybutanoyl-CoA = (2E)-butenoyl-CoA + H2O. The enzyme catalyses 2-methylpropenoyl-CoA + H2O = (S)-3-hydroxyisobutanoyl-CoA. The catalysed reaction is (3S)-hydroxyhexanoyl-CoA = (2E)-hexenoyl-CoA + H2O. It carries out the reaction (3S)-hydroxydecanoyl-CoA = (2E)-decenoyl-CoA + H2O. It functions in the pathway lipid metabolism; fatty acid beta-oxidation. In terms of biological role, converts unsaturated trans-2-enoyl-CoA species ((2E)-enoyl-CoA) to the corresponding 3(S)-3-hydroxyacyl-CoA species through addition of a water molecule to the double bond. Catalyzes the hydration of medium- and short-chained fatty enoyl-CoA thioesters from 4 carbons long (C4) up to C16. Has high substrate specificity for crotonyl-CoA ((2E)-butenoyl-CoA) and moderate specificity for acryloyl-CoA, 3-methylcrotonyl-CoA (3-methyl-(2E)-butenoyl-CoA) and methacrylyl-CoA ((2E)-2-methylpropenoyl-CoA). Can bind tiglyl-CoA (2-methylcrotonoyl-CoA), but hydrates only a small amount of this substrate. Plays a key role in the beta-oxidation spiral of short- and medium-chain fatty acid oxidation. At a lower rate than the hydratase reaction, catalyzes the isomerase reaction of trans-3-enoyl-CoA species (such as (3E)-hexenoyl-CoA) to trans-2-enoyl-CoA species (such as (2E)-hexenoyl-CoA), which are subsequently hydrated to 3(S)-3-hydroxyacyl-CoA species (such as (3S)-hydroxyhexanoyl-CoA). In Bos taurus (Bovine), this protein is Enoyl-CoA hydratase, mitochondrial (ECHS1).